The chain runs to 404 residues: Glucose-1-phosphate adenylyltransferase (404 aa).

Alpha-D-glucose 1-phosphate contacts are provided by residues Tyr99, Gly164, 179–180, and Ser197; that span reads EK.

The protein belongs to the bacterial/plant glucose-1-phosphate adenylyltransferase family.

The catalysed reaction is alpha-D-glucose 1-phosphate + ATP + H(+) = ADP-alpha-D-glucose + diphosphate. It participates in glycan biosynthesis; glycogen biosynthesis. Its function is as follows. Involved in the biosynthesis of ADP-glucose, a building block, required in the biosynthesis of maltose-1-phosphate (M1P) and in the elongation reactions to produce linear alpha-1,4-glucans. Catalyzes the reaction between ATP and alpha-D-glucose 1-phosphate (G1P) to produce pyrophosphate and ADP-Glc. In Mycolicibacterium vanbaalenii (strain DSM 7251 / JCM 13017 / BCRC 16820 / KCTC 9966 / NRRL B-24157 / PYR-1) (Mycobacterium vanbaalenii), this protein is Glucose-1-phosphate adenylyltransferase.